A 165-amino-acid chain; its full sequence is Large ribosomal subunit protein uL10 (165 aa).

It belongs to the universal ribosomal protein uL10 family. As to quaternary structure, part of the ribosomal stalk of the 50S ribosomal subunit. The N-terminus interacts with L11 and the large rRNA to form the base of the stalk. The C-terminus forms an elongated spine to which L12 dimers bind in a sequential fashion forming a multimeric L10(L12)X complex.

Its function is as follows. Forms part of the ribosomal stalk, playing a central role in the interaction of the ribosome with GTP-bound translation factors. This is Large ribosomal subunit protein uL10 from Hamiltonella defensa subsp. Acyrthosiphon pisum (strain 5AT).